A 171-amino-acid chain; its full sequence is Co-chaperone protein HscB homolog (171 aa).

The region spanning 2 to 74 (NHFELFGLPS…ISRAEYILAE (73 aa)) is the J domain.

The protein belongs to the HscB family. In terms of assembly, interacts with HscA and stimulates its ATPase activity.

In terms of biological role, co-chaperone involved in the maturation of iron-sulfur cluster-containing proteins. Seems to help targeting proteins to be folded toward HscA. The polypeptide is Co-chaperone protein HscB homolog (Vibrio parahaemolyticus serotype O3:K6 (strain RIMD 2210633)).